A 415-amino-acid polypeptide reads, in one-letter code: Serine hydroxymethyltransferase (415 aa).

(6S)-5,6,7,8-tetrahydrofolate is bound by residues leucine 117 and 121–123 (GHL). The residue at position 226 (lysine 226) is an N6-(pyridoxal phosphate)lysine. (6S)-5,6,7,8-tetrahydrofolate is bound by residues glutamate 241 and 349–351 (SPF).

The protein belongs to the SHMT family. As to quaternary structure, homodimer. Pyridoxal 5'-phosphate serves as cofactor.

Its subcellular location is the cytoplasm. It catalyses the reaction (6R)-5,10-methylene-5,6,7,8-tetrahydrofolate + glycine + H2O = (6S)-5,6,7,8-tetrahydrofolate + L-serine. It functions in the pathway one-carbon metabolism; tetrahydrofolate interconversion. The protein operates within amino-acid biosynthesis; glycine biosynthesis; glycine from L-serine: step 1/1. Catalyzes the reversible interconversion of serine and glycine with tetrahydrofolate (THF) serving as the one-carbon carrier. This reaction serves as the major source of one-carbon groups required for the biosynthesis of purines, thymidylate, methionine, and other important biomolecules. Also exhibits THF-independent aldolase activity toward beta-hydroxyamino acids, producing glycine and aldehydes, via a retro-aldol mechanism. This is Serine hydroxymethyltransferase from Geotalea uraniireducens (strain Rf4) (Geobacter uraniireducens).